Consider the following 1265-residue polypeptide: Kinesin-like protein Klp98A (1265 aa).

One can recognise a Kinesin motor domain in the interval 3–364 (SLKVAVRVRP…LRYANRAKNI (362 aa)). An ATP-binding site is contributed by 100 to 107 (GQTGSGKT). Disordered regions lie at residues 597–621 (GASP…DPEL), 828–864 (EAES…DVSK), and 884–954 (VSSP…CTPS). Coiled coils occupy residues 619 to 670 (PELQ…EEMD) and 768 to 848 (AQFI…LGNK). Composition is skewed to polar residues over residues 846–857 (GNKSMSTSTSTN), 884–901 (VSSP…SNCS), and 917–927 (SGSSEETSRTC). Positions 933–946 (SGSGSGSVGIGGSG) are enriched in gly residues. The stretch at 1035–1071 (DLNKAQLDEHIADLQDLQRRYIQMEQEMLQSVQDLEA) forms a coiled coil. The PX domain maps to 1129 to 1259 (GEHFITIPSF…SFFKKGLFEN (131 aa)).

This sequence belongs to the TRAFAC class myosin-kinesin ATPase superfamily. Kinesin family. Interacts with Atg8a and Rab14.

Its subcellular location is the early endosome. Plus end-directed motor protein involved in asymmetric cell division of sensory organ precursor (SOP) cells by playing a role in the asymmetric localization of Sara-expressing endosomes to the pIIa daughter cell but not to the pIIb cell. Targets Sara-expressing endosomes to the central spindle which is symmetrically arranged in early cell division. During late cytokinesis, central spindle asymmetry is generated by enrichment of Patronin on the pIIb side which protects microtubules from depolymerization by Klp10A while unprotected microtubules on the pIIa side are disassembled by Klp10A, leading to the asymmetric delivery of Sara-expressing endosomes to the pIIa daughter cell. Also plays a role in regulation of autophagosome formation, fusion and positioning and is required for normal localization of Rab14. This is Kinesin-like protein Klp98A from Drosophila melanogaster (Fruit fly).